The sequence spans 170 residues: Translation machinery-associated protein 16 homolog (170 aa).

The protein belongs to the TMA16 family.

In Dictyostelium discoideum (Social amoeba), this protein is Translation machinery-associated protein 16 homolog.